Consider the following 214-residue polypeptide: MDDSETGFNLKVVLVSFKQCLDEKEEVLLDPYIASWKGLVRFLNSLGTIFSFISKDVVSKLRIMERLRGGPQSEHYRSLQAMVAHELSNRLVDLERRSHHPESGCRTVLRLHRALHWLQLFLEGLRTSPEDARTSALCADSYNASLAAYHPWVVRRAVTVAFCTLPTREVFLEAMNVGPPEQAVQMLGEALPFIQRVYNVSQKLYAEHSLLDLP.

Residues Asp-56, Lys-60, Arg-106, Arg-110, and His-150 each coordinate an N-acylsphingoid base 1-phosphate.

Belongs to the GLTP family. Ubiquitous. Detected in heart, brain, placenta, lung, liver, skeletal muscle, kidney, pancreas, spleen, thymus, prostate, testis, ovary, small intestine, colon and peripheral blood leukocytes.

Its subcellular location is the cytoplasm. It is found in the cytosol. It localises to the golgi apparatus. The protein resides in the trans-Golgi network membrane. The protein localises to the cell membrane. Its subcellular location is the endosome membrane. It is found in the nucleus outer membrane. The enzyme catalyses N-(hexadecanoyl)-sphing-4-enine-1-phosphate(in) = N-(hexadecanoyl)-sphing-4-enine-1-phosphate(out). It catalyses the reaction N-(9Z-octadecenoyl)-sphing-4-enine-1-phosphate(in) = N-(9Z-octadecenoyl)-sphing-4-enine-1-phosphate(out). Its function is as follows. Mediates the intracellular transfer of ceramide-1-phosphate (C1P) between organelle membranes and the cell membrane. Required for normal structure of the Golgi stacks. Can bind phosphoceramides with a variety of aliphatic chains, but has a preference for lipids with saturated C16:0 or monounsaturated C18:1 aliphatic chains, and is inefficient with phosphoceramides containing lignoceryl (C24:0). Plays a role in the regulation of the cellular levels of ceramide-1-phosphate, and thereby contributes to the regulation of phospholipase PLA2G4A activity and the release of arachidonic acid. Has no activity with galactosylceramide, lactosylceramide, sphingomyelin, phosphatidylcholine, phosphatidic acid and ceramide. C1P transfer is stimulated by phosphatidylserine in C1P source vesicles. Regulates autophagy, inflammasome mediated IL1B and IL18 processing, and pyroptosis, but not apoptosis. This Homo sapiens (Human) protein is Ceramide-1-phosphate transfer protein.